A 312-amino-acid polypeptide reads, in one-letter code: MARRRKGRVIHGVILLDKPTGISSNDALQKVKRLYGAEKAGHTGALDPLATGMLPICLGEATKFSQFLLDSDKRYRVIAKLGERTDTSDSDGQVVQTRPVHVDYDTLLACIAKFRGETDQVPSMFSALKYQGRPLYEYARQGIEVPREARKITVYEIELHRFEGDEVEMEVHCSKGTYIRTIVDDLGEMLGCGAHVTMLRRVGVANYPYERMVTLEQLNALVEQAHRDEKAVADVLDPLLLPMDTAVEALPEVNVIPELMTLIQHGQAVQVSGAPSDGMVRITGGEQKLFLGVGEIDDNGKVAPKRLVVYGE.

Asp47 functions as the Nucleophile in the catalytic mechanism.

This sequence belongs to the pseudouridine synthase TruB family. Type 1 subfamily.

The enzyme catalyses uridine(55) in tRNA = pseudouridine(55) in tRNA. In terms of biological role, responsible for synthesis of pseudouridine from uracil-55 in the psi GC loop of transfer RNAs. The protein is tRNA pseudouridine synthase B of Vibrio cholerae serotype O1 (strain M66-2).